A 120-amino-acid chain; its full sequence is Protein EPIDERMAL PATTERNING FACTOR 2 (120 aa).

A signal peptide spans 1–25 (MTKFVRKYMFCLVLVFAACSLVVNS). Intrachain disulfides connect cysteine 76-cysteine 107, cysteine 80-cysteine 86, cysteine 83-cysteine 109, and cysteine 95-cysteine 101.

It belongs to the plant cysteine rich small secretory peptide family. Epidermal patterning factor subfamily. In terms of assembly, interacts with ERECTA, ERL1 and TMM. In terms of tissue distribution, expressed in leaves, especially by the MMCs and their early descendants cells (stomatal lineage cells) including guard mother cells (GMCs).

It is found in the secreted. Its function is as follows. Controls stomatal patterning. Regulates the number of cells that enter, and remain in, the stomatal lineage by inhibiting protodermal cells from adopting the meristemoid mother cell (MMC) fate in a non-cell-autonomous manner. Mediates stomatal development inhibition. MEPF2: mobile signal controlling stomatal development in a non-cell-autonomous manner. Uses ERECTA as major receptor. Inactivated by cleavage by CRSP (AC Q9LNU1). May act by competing with somatogen (AC Q9SV72) for the same receptor, TMM (AC Q9SSD1). The polypeptide is Protein EPIDERMAL PATTERNING FACTOR 2 (Arabidopsis thaliana (Mouse-ear cress)).